We begin with the raw amino-acid sequence, 60 residues long: Three-finger toxin MS3 (60 aa).

Disulfide bonds link Cys3–Cys22, Cys15–Cys39, Cys41–Cys52, and Cys53–Cys58.

Belongs to the three-finger toxin family. Short-chain subfamily. Type I alpha-neurotoxin sub-subfamily. As to expression, expressed by the venom gland.

Its subcellular location is the secreted. Functionally, produces peripheral paralysis by blocking neuromuscular transmission at the postsynaptic site. Binds to and inhibits the endogenous nicotinic acetylcholine receptors (nAChR) in human rhabdomyosarcoma TE 671 cell line with an IC(50) of 346 mM. This neurotoxin is lethal to mice by intraperitoneal injection and to zebrafish by injection at the back of the dorsolateral region. In Micrurus surinamensis (Surinam coral snake), this protein is Three-finger toxin MS3.